We begin with the raw amino-acid sequence, 675 residues long: Secretogranin-1 (675 aa).

A signal peptide spans 1–20 (MQRAMLLGLLGAAALAAVIS). An intrachain disulfide couples cysteine 36 to cysteine 57. Over residues 64 to 90 (SGKEVKGEEKGENENSKFEVRLLRDPS) the composition is skewed to basic and acidic residues. Disordered regions lie at residues 64 to 507 (SGKE…YPTT) and 528 to 555 (NSDF…VTMT). Phosphoserine is present on residues serine 93, serine 99, serine 100, serine 129, and serine 147. O-linked (Xyl...) (chondroitin sulfate) serine glycosylation occurs at serine 93. 2 stretches are compositionally biased toward basic and acidic residues: residues 148–161 (KEAK…RGGK) and 168–248 (GKIY…KPQE). Position 190 is a phosphoserine (serine 190). Serine 236 carries O-linked (Xyl...) (chondroitin sulfate) serine glycosylation. Over residues 250–269 (PDQDQSEEESEEGEEGEEGA) the composition is skewed to acidic residues. Phosphoserine occurs at positions 255, 259, 291, 309, and 333. Residues 292 to 311 (YEGRRPLSEERKHAAGESKD) show a composition bias toward basic and acidic residues. Tyrosine 339 is modified (sulfotyrosine). Composition is skewed to basic and acidic residues over residues 361–410 (GSEE…EGAK) and 429–452 (SRQE…DTAK). Phosphoserine occurs at positions 362, 372, 375, and 397. Tyrosine 469 is modified (sulfotyrosine). Serine 490, serine 529, and serine 540 each carry phosphoserine. Tyrosine 563 bears the Sulfotyrosine mark. The interval 620 to 646 (DFYDSEEQMGPHQEAEDEKDRADQRVL) is disordered. Residue tyrosine 622 is modified to Sulfotyrosine; partial. Residue serine 624 is modified to Phosphoserine. Over residues 637–646 (EKDRADQRVL) the composition is skewed to basic and acidic residues. Arginine amide; in CCB peptide short form is present on arginine 674.

It belongs to the chromogranin/secretogranin protein family. In terms of assembly, interacts with ITPR1 in the secretory granules. In terms of processing, extensively processed in glucagonoma tissue by limited proteolysis at conserved basic residues. Alternative processing are seen in different tissues. The proglucagon-converting enzymes present in transformed alpha-cells are likely candidates to be involved in tissue-specific processing. In terms of tissue distribution, expressed in the brain, adrenal medulla and anterior pituitary. In the brain, localized to the hippocampal formation, the endocrine hypothalamus, the olfactory system, and in anatomically distinct structures in the pons-medulla.

Its subcellular location is the secreted. Secretogranin-1 is a neuroendocrine secretory granule protein, which may be the precursor for other biologically active peptides. This chain is Secretogranin-1 (Chgb), found in Rattus norvegicus (Rat).